The primary structure comprises 31 residues: Photosystem II reaction center protein T (31 aa).

The helical transmembrane segment at 3–23 threads the bilayer; the sequence is SVAYILILTMALAVLFFAIAF.

Belongs to the PsbT family. In terms of assembly, PSII is composed of 1 copy each of membrane proteins PsbA, PsbB, PsbC, PsbD, PsbE, PsbF, PsbH, PsbI, PsbJ, PsbK, PsbL, PsbM, PsbT, PsbX, PsbY, PsbZ, Psb30/Ycf12, peripheral proteins PsbO, CyanoQ (PsbQ), PsbU, PsbV and a large number of cofactors. It forms dimeric complexes.

The protein localises to the cellular thylakoid membrane. Functionally, found at the monomer-monomer interface of the photosystem II (PS II) dimer, plays a role in assembly and dimerization of PSII. PSII is a light-driven water plastoquinone oxidoreductase, using light energy to abstract electrons from H(2)O, generating a proton gradient subsequently used for ATP formation. The sequence is that of Photosystem II reaction center protein T from Gloeothece citriformis (strain PCC 7424) (Cyanothece sp. (strain PCC 7424)).